A 572-amino-acid polypeptide reads, in one-letter code: Probable pyruvate decarboxylase C186.09 (572 aa).

Substrate-binding residues include Asp-38 and His-125. The thiamine pyrophosphate binding stretch occupies residues 400-482 (DSWFGGMRIT…FLINNRGYTI (83 aa)). Residues Asp-450, Asn-477, and Gly-479 each coordinate Mg(2+). Glu-483 lines the substrate pocket.

It belongs to the TPP enzyme family. In terms of assembly, homotetramer. It depends on a metal cation as a cofactor. Thiamine diphosphate serves as cofactor.

The catalysed reaction is a 2-oxocarboxylate + H(+) = an aldehyde + CO2. The chain is Probable pyruvate decarboxylase C186.09 from Schizosaccharomyces pombe (strain 972 / ATCC 24843) (Fission yeast).